A 287-amino-acid polypeptide reads, in one-letter code: 4,4'-diapophytoene synthase (287 aa).

(2E,6E)-farnesyl diphosphate-binding positions include 18–21, tyrosine 41, and arginine 45; that span reads HSKS. 2 residues coordinate Mg(2+): aspartate 48 and aspartate 52. Glutamine 165 contacts (2E,6E)-farnesyl diphosphate. Asparagine 168 lines the Mg(2+) pocket. A (2E,6E)-farnesyl diphosphate-binding site is contributed by arginine 171. Aspartate 172 is a binding site for Mg(2+). Residue tyrosine 248 participates in (2E,6E)-farnesyl diphosphate binding.

This sequence belongs to the phytoene/squalene synthase family. CrtM subfamily. It depends on Mg(2+) as a cofactor.

It carries out the reaction 2 (2E,6E)-farnesyl diphosphate = 15-cis-4,4'-diapophytoene + 2 diphosphate. Its pathway is carotenoid biosynthesis; staphyloxanthin biosynthesis; staphyloxanthin from farnesyl diphosphate: step 1/5. Its function is as follows. Involved in the biosynthesis of the yellow-orange carotenoid staphyloxanthin, which plays a role in the virulence via its protective function against oxidative stress. Catalyzes the head-to-head condensation of two molecules of farnesyl diphosphate (FPP) into the colorless C(30) carotenoid 4,4'-diapophytoene (dehydrosqualene). In Staphylococcus aureus (strain NCTC 8325 / PS 47), this protein is 4,4'-diapophytoene synthase.